We begin with the raw amino-acid sequence, 329 residues long: Phosphate acetyltransferase (329 aa).

Belongs to the phosphate acetyltransferase and butyryltransferase family.

The protein resides in the cytoplasm. The enzyme catalyses acetyl-CoA + phosphate = acetyl phosphate + CoA. It functions in the pathway metabolic intermediate biosynthesis; acetyl-CoA biosynthesis; acetyl-CoA from acetate: step 2/2. The polypeptide is Phosphate acetyltransferase (pta) (Corynebacterium glutamicum (strain ATCC 13032 / DSM 20300 / JCM 1318 / BCRC 11384 / CCUG 27702 / LMG 3730 / NBRC 12168 / NCIMB 10025 / NRRL B-2784 / 534)).